We begin with the raw amino-acid sequence, 338 residues long: Diacylglycerol acyltransferase/mycolyltransferase Ag85A (338 aa).

Residues 1-42 (MQLVDRVRGAVTGMSRRLVVGAVGAALVSGLVGAVGGTATAG) form the signal peptide. 85 to 86 (LR) is a binding site for substrate. Positions 101–111 (FEWYDQSGLSV) are fibronectin-binding. A disulfide bond links C130 and C135. Residues S169 and D197 each coordinate substrate. S169 acts as the Nucleophile in catalysis. Residue E273 is part of the active site. Residues 275 to 278 (FVRT), K282, and 305 to 307 (HSW) each bind substrate. H305 is an active-site residue.

This sequence belongs to the mycobacterial A85 antigen family. Homodimer.

It is found in the secreted. The protein resides in the cell wall. Its subcellular location is the cytoplasm. The catalysed reaction is an acyl-CoA + a 1,2-diacyl-sn-glycerol = a triacyl-sn-glycerol + CoA. The enzyme catalyses 2 alpha,alpha'-trehalose 6-mycolate = alpha,alpha'-trehalose 6,6'-bismycolate + alpha,alpha-trehalose. Functionally, the antigen 85 proteins (FbpA, FbpB, FbpC) are responsible for the high affinity of mycobacteria for fibronectin, a large adhesive glycoprotein, which facilitates the attachment of M.tuberculosis to murine alveolar macrophages (AMs). They also help to maintain the integrity of the cell wall by catalyzing the transfer of mycolic acids to cell wall arabinogalactan, and through the synthesis of alpha,alpha-trehalose dimycolate (TDM, cord factor). They catalyze the transfer of a mycoloyl residue from one molecule of alpha,alpha-trehalose monomycolate (TMM) to another TMM, leading to the formation of TDM. FbpA mediates triacylglycerol (TAG) formation with long-chain acyl-CoA as the acyl donor and 1,2-dipalmitoyl-sn-glycerol (1,2-dipalmitin) as the acyl acceptor. It has a preference for C26:0-CoA over C18:1-CoA. The polypeptide is Diacylglycerol acyltransferase/mycolyltransferase Ag85A (fbpA) (Mycobacterium bovis (strain ATCC BAA-935 / AF2122/97)).